A 341-amino-acid chain; its full sequence is Ferredoxin--NADP reductase (341 aa).

FAD-binding residues include Asp-38, Gln-46, Tyr-51, Val-91, Phe-125, Asp-292, and Thr-333.

Belongs to the ferredoxin--NADP reductase type 2 family. As to quaternary structure, homodimer. It depends on FAD as a cofactor.

The enzyme catalyses 2 reduced [2Fe-2S]-[ferredoxin] + NADP(+) + H(+) = 2 oxidized [2Fe-2S]-[ferredoxin] + NADPH. In Gluconacetobacter diazotrophicus (strain ATCC 49037 / DSM 5601 / CCUG 37298 / CIP 103539 / LMG 7603 / PAl5), this protein is Ferredoxin--NADP reductase.